Here is an 886-residue protein sequence, read N- to C-terminus: Valine--tRNA ligase (886 aa).

A 'HIGH' region motif is present at residues 53 to 63 (PNVTGSLHMGH). Positions 540 to 544 (KMSKS) match the 'KMSKS' region motif. K543 is a binding site for ATP. Positions 819-851 (TIDVAAERRRLEKELAGAQKELASTAAKLANAD) form a coiled coil.

It belongs to the class-I aminoacyl-tRNA synthetase family. ValS type 1 subfamily. In terms of assembly, monomer.

The protein resides in the cytoplasm. It carries out the reaction tRNA(Val) + L-valine + ATP = L-valyl-tRNA(Val) + AMP + diphosphate. Functionally, catalyzes the attachment of valine to tRNA(Val). As ValRS can inadvertently accommodate and process structurally similar amino acids such as threonine, to avoid such errors, it has a 'posttransfer' editing activity that hydrolyzes mischarged Thr-tRNA(Val) in a tRNA-dependent manner. The chain is Valine--tRNA ligase from Mycobacterium tuberculosis (strain CDC 1551 / Oshkosh).